Reading from the N-terminus, the 168-residue chain is 6,7-dimethyl-8-ribityllumazine synthase (168 aa).

5-amino-6-(D-ribitylamino)uracil-binding positions include Phe24, 58 to 60, and 82 to 84; these read ALE and AVI. 87–88 lines the (2S)-2-hydroxy-3-oxobutyl phosphate pocket; that stretch reads ET. The Proton donor role is filled by His90. Asn115 serves as a coordination point for 5-amino-6-(D-ribitylamino)uracil. Arg129 is a binding site for (2S)-2-hydroxy-3-oxobutyl phosphate.

Belongs to the DMRL synthase family.

The catalysed reaction is (2S)-2-hydroxy-3-oxobutyl phosphate + 5-amino-6-(D-ribitylamino)uracil = 6,7-dimethyl-8-(1-D-ribityl)lumazine + phosphate + 2 H2O + H(+). Its pathway is cofactor biosynthesis; riboflavin biosynthesis; riboflavin from 2-hydroxy-3-oxobutyl phosphate and 5-amino-6-(D-ribitylamino)uracil: step 1/2. Functionally, catalyzes the formation of 6,7-dimethyl-8-ribityllumazine by condensation of 5-amino-6-(D-ribitylamino)uracil with 3,4-dihydroxy-2-butanone 4-phosphate. This is the penultimate step in the biosynthesis of riboflavin. This chain is 6,7-dimethyl-8-ribityllumazine synthase, found in Paraburkholderia phytofirmans (strain DSM 17436 / LMG 22146 / PsJN) (Burkholderia phytofirmans).